Reading from the N-terminus, the 511-residue chain is Pancreatic alpha-amylase (511 aa).

An N-terminal signal peptide occupies residues 1-15 (MKFFLLLFTIGFCWA). Q16 carries the post-translational modification Pyrrolidone carboxylic acid. Intrachain disulfides connect C43/C101, C85/C130, and C156/C175. N115, R173, and D182 together coordinate Ca(2+). Chloride is bound at residue R210. D212 functions as the Nucleophile in the catalytic mechanism. H216 contacts Ca(2+). E248 (proton donor) is an active-site residue. N313 and R352 together coordinate chloride. 2 disulfides stabilise this stretch: C393–C399 and C465–C477. N-linked (GlcNAc...) asparagine glycosylation occurs at N476.

This sequence belongs to the glycosyl hydrolase 13 family. In terms of assembly, monomer. Binds to the sea anemone inhibitor helianthamide. Ca(2+) is required as a cofactor. Chloride serves as cofactor. In terms of tissue distribution, detected in pancreas (at protein level).

The protein localises to the secreted. It localises to the extracellular space. The enzyme catalyses Endohydrolysis of (1-&gt;4)-alpha-D-glucosidic linkages in polysaccharides containing three or more (1-&gt;4)-alpha-linked D-glucose units.. In Homo sapiens (Human), this protein is Pancreatic alpha-amylase (AMY2A).